The following is a 250-amino-acid chain: Histone H1.2 (250 aa).

Residues M1–S11 show a composition bias toward polar residues. Disordered regions lie at residues M1–D53 and K101–K250. The span at K27–P42 shows a compositional bias: low complexity. Residues S44–R118 enclose the H15 domain. Over residues A120–K133 the composition is skewed to basic and acidic residues. A compositionally biased stretch (low complexity) spans S151–A161. Residues K174–K191 show a composition bias toward basic and acidic residues. The segment covering T192–P211 has biased composition (low complexity). Basic residues-rich tracts occupy residues K212–K225 and T235–K250.

Belongs to the histone H1/H5 family.

It is found in the nucleus. It localises to the chromosome. Its function is as follows. Histones H1 are necessary for the condensation of nucleosome chains into higher-order structures. The protein is Histone H1.2 (His1.2) of Drosophila virilis (Fruit fly).